The following is a 191-amino-acid chain: Probable calcium-binding protein CML8 (191 aa).

The tract at residues 1-41 (MASKYRGYYHDEASSAAGGGGGGGGGDGYRREKQVRKKRLT) is disordered. Over residues 17-27 (AGGGGGGGGGD) the composition is skewed to gly residues. EF-hand domains are found at residues 43-78 (QKRK…LGFE), 79-114 (MTPE…KMGE), 116-151 (DARE…TGEP), and 152-187 (FTLD…IGFG). 20 residues coordinate Ca(2+): Asp56, Asp58, Ser60, Thr62, Glu67, Asp92, Asp94, Ser96, Thr98, Glu103, Asp129, Asp131, Asn133, Lys135, Asp140, Asp165, Asn167, Asp169, Glu171, and Glu176.

Functionally, potential calcium sensor. This chain is Probable calcium-binding protein CML8 (CML8), found in Oryza sativa subsp. japonica (Rice).